An 80-amino-acid polypeptide reads, in one-letter code: MKEHDLINMEGIVTESLPNAMFRVFLDNGCHVLTHISGKIRRNYIRILPGDRVKVELSIYDLTKGRILYRIRNEASKDTL.

The S1-like domain occupies 1-72 (MKEHDLINME…TKGRILYRIR (72 aa)).

This sequence belongs to the IF-1 family. Component of the 30S ribosomal translation pre-initiation complex which assembles on the 30S ribosome in the order IF-2 and IF-3, IF-1 and N-formylmethionyl-tRNA(fMet); mRNA recruitment can occur at any time during PIC assembly.

The protein resides in the plastid. The protein localises to the chloroplast. One of the essential components for the initiation of protein synthesis. Stabilizes the binding of IF-2 and IF-3 on the 30S subunit to which N-formylmethionyl-tRNA(fMet) subsequently binds. Helps modulate mRNA selection, yielding the 30S pre-initiation complex (PIC). Upon addition of the 50S ribosomal subunit IF-1, IF-2 and IF-3 are released leaving the mature 70S translation initiation complex. The sequence is that of Translation initiation factor IF-1, chloroplastic from Psilotum nudum (Whisk fern).